The primary structure comprises 438 residues: Phosphatidylserine decarboxylase proenzyme 1, mitochondrial (438 aa).

Residues 1 to 21 (MRRFRVWPPSPSPWPLLASRP) constitute a mitochondrion transit peptide. Residues 22–48 (CPHSHHHRSPFHASANSGARQGNFILP) lie on the Mitochondrial matrix side of the membrane. A helical transmembrane segment spans residues 49 to 67 (GATAATLVMFGILHARRMY). The Mitochondrial intermembrane portion of the chain corresponds to 68–438 (EDQKVVERKE…EAIGRWTSRE (371 aa)). Catalysis depends on charge relay system; for autoendoproteolytic cleavage activity residues Asp-173, His-273, and Ser-387. The active-site Schiff-base intermediate with substrate; via pyruvic acid; for decarboxylase activity is the Ser-387. Ser-387 is subject to Pyruvic acid (Ser); by autocatalysis.

Belongs to the phosphatidylserine decarboxylase family. PSD-B subfamily. Eukaryotic type I sub-subfamily. As to quaternary structure, heterodimer of a large membrane-associated beta subunit and a small pyruvoyl-containing alpha subunit. It depends on pyruvate as a cofactor. Post-translationally, is synthesized initially as an inactive proenzyme. Formation of the active enzyme involves a self-maturation process in which the active site pyruvoyl group is generated from an internal serine residue via an autocatalytic post-translational modification. Two non-identical subunits are generated from the proenzyme in this reaction, and the pyruvate is formed at the N-terminus of the alpha chain, which is derived from the carboxyl end of the proenzyme. The autoendoproteolytic cleavage occurs by a canonical serine protease mechanism, in which the side chain hydroxyl group of the serine supplies its oxygen atom to form the C-terminus of the beta chain, while the remainder of the serine residue undergoes an oxidative deamination to produce ammonia and the pyruvoyl prosthetic group on the alpha chain. During this reaction, the Ser that is part of the protease active site of the proenzyme becomes the pyruvoyl prosthetic group, which constitutes an essential element of the active site of the mature decarboxylase.

It localises to the mitochondrion inner membrane. The enzyme catalyses a 1,2-diacyl-sn-glycero-3-phospho-L-serine + H(+) = a 1,2-diacyl-sn-glycero-3-phosphoethanolamine + CO2. It participates in phospholipid metabolism; phosphatidylethanolamine biosynthesis; phosphatidylethanolamine from CDP-diacylglycerol: step 2/2. Catalyzes the formation of phosphatidylethanolamine (PtdEtn) from phosphatidylserine (PtdSer). Plays a central role in phospholipid metabolism and in the interorganelle trafficking of phosphatidylserine. The protein is Phosphatidylserine decarboxylase proenzyme 1, mitochondrial (PSD1) of Oryza sativa subsp. japonica (Rice).